The chain runs to 122 residues: Large ribosomal subunit protein bL12 (122 aa).

This sequence belongs to the bacterial ribosomal protein bL12 family. Homodimer. Part of the ribosomal stalk of the 50S ribosomal subunit. Forms a multimeric L10(L12)X complex, where L10 forms an elongated spine to which 2 to 4 L12 dimers bind in a sequential fashion. Binds GTP-bound translation factors.

Its function is as follows. Forms part of the ribosomal stalk which helps the ribosome interact with GTP-bound translation factors. Is thus essential for accurate translation. The sequence is that of Large ribosomal subunit protein bL12 from Vibrio parahaemolyticus serotype O3:K6 (strain RIMD 2210633).